Reading from the N-terminus, the 271-residue chain is Undecaprenyl-diphosphatase 2 (271 aa).

Helical transmembrane passes span 1-21, 46-66, 88-108, 111-131, 146-166, 190-210, 220-240, and 251-271; these read MNFF…LFPI, NFLE…IVYF, ALIV…EQTI, AFSD…LLFF, LKGW…IPGF, SMLL…PKLI, LSLI…YILM, and MLPF…SKAI.

The protein belongs to the UppP family.

The protein resides in the cell membrane. It catalyses the reaction di-trans,octa-cis-undecaprenyl diphosphate + H2O = di-trans,octa-cis-undecaprenyl phosphate + phosphate + H(+). Catalyzes the dephosphorylation of undecaprenyl diphosphate (UPP). Confers resistance to bacitracin. This chain is Undecaprenyl-diphosphatase 2, found in Oenococcus oeni (strain ATCC BAA-331 / PSU-1).